Reading from the N-terminus, the 347-residue chain is Protein RecA (347 aa).

67-74 (GPESSGKT) is an ATP binding site. Positions 326-347 (DKLLPGRAPSSEAQGTESGQEA) are disordered. A compositionally biased stretch (polar residues) spans 336-347 (SEAQGTESGQEA).

This sequence belongs to the RecA family.

It is found in the cytoplasm. In terms of biological role, can catalyze the hydrolysis of ATP in the presence of single-stranded DNA, the ATP-dependent uptake of single-stranded DNA by duplex DNA, and the ATP-dependent hybridization of homologous single-stranded DNAs. It interacts with LexA causing its activation and leading to its autocatalytic cleavage. The sequence is that of Protein RecA from Alkalilimnicola ehrlichii (strain ATCC BAA-1101 / DSM 17681 / MLHE-1).